The chain runs to 214 residues: Holliday junction branch migration complex subunit RuvA (214 aa).

Residues 1–63 (MISSLRGTVL…EDSLTLFGFP (63 aa)) are domain I. The tract at residues 64–139 (GPDELRAFEL…KLFVTQPRAR (76 aa)) is domain II. A flexible linker region spans residues 139 to 143 (RSATS). A domain III region spans residues 144–214 (AASTVTADVV…AAPTGQAADR (71 aa)).

Belongs to the RuvA family. Homotetramer. Forms an RuvA(8)-RuvB(12)-Holliday junction (HJ) complex. HJ DNA is sandwiched between 2 RuvA tetramers; dsDNA enters through RuvA and exits via RuvB. An RuvB hexamer assembles on each DNA strand where it exits the tetramer. Each RuvB hexamer is contacted by two RuvA subunits (via domain III) on 2 adjacent RuvB subunits; this complex drives branch migration. In the full resolvosome a probable DNA-RuvA(4)-RuvB(12)-RuvC(2) complex forms which resolves the HJ.

It is found in the cytoplasm. Its function is as follows. The RuvA-RuvB-RuvC complex processes Holliday junction (HJ) DNA during genetic recombination and DNA repair, while the RuvA-RuvB complex plays an important role in the rescue of blocked DNA replication forks via replication fork reversal (RFR). RuvA specifically binds to HJ cruciform DNA, conferring on it an open structure. The RuvB hexamer acts as an ATP-dependent pump, pulling dsDNA into and through the RuvAB complex. HJ branch migration allows RuvC to scan DNA until it finds its consensus sequence, where it cleaves and resolves the cruciform DNA. The sequence is that of Holliday junction branch migration complex subunit RuvA from Clavibacter michiganensis subsp. michiganensis (strain NCPPB 382).